A 206-amino-acid chain; its full sequence is GDT1-like protein sll0615 (206 aa).

5 helical membrane passes run 36–56, 58–78, 114–134, 151–171, and 185–205; these read WVLVGVVGGLAAMTILSVLMG, IFTFLPTRYINYAEVALFLIF, IVPRGWGIVVESFALTFVAEW, AWGVSAGAILGHTICAVIAVM, and VTLIGGLLFYLFAVVSWWTKI.

Belongs to the GDT1 family.

The protein resides in the cell membrane. This is GDT1-like protein sll0615 from Synechocystis sp. (strain ATCC 27184 / PCC 6803 / Kazusa).